Reading from the N-terminus, the 190-residue chain is MDPLTVYKNSVKQQIDSADLLVANLVNENFVLSEKLDTKATEIKQLQKQIDSLNAQVKELKTQTSQQAENSEVIKDLYEYLCNVRVHKSYEDDSGLWFDISQGTHSGGSSDDYSIMDYKLGFVKGQAQVTEVIYAPVLKQRSTEELYSLQSKLPEYLFETLSFPLSSLNQFYNKIAKSLNKKREKKDETE.

The stretch at 31 to 70 forms a coiled coil; the sequence is VLSEKLDTKATEIKQLQKQIDSLNAQVKELKTQTSQQAEN.

As to quaternary structure, component of the monopolin complex composed of at least CSM1, LRS4 and MAM1. The complex associates with the kinetochore. Interacts with CDC46, CDC47, GIC1, GIC2, MCM3 and NUR1.

The protein localises to the nucleus. It is found in the nucleolus. Its subcellular location is the chromosome. The protein resides in the centromere. Functionally, component of the monopolin complex which promotes monoorientation during meiosis I, required for chromosome segregation during meiosis. Also plays a mitotic role in DNA replication. The protein is Monopolin complex subunit CSM1 (CSM1) of Saccharomyces cerevisiae (strain ATCC 204508 / S288c) (Baker's yeast).